The primary structure comprises 260 residues: Circadian clock-controlled protein daywake (260 aa).

The signal sequence occupies residues Met1 to Ala25.

This sequence belongs to the TO family. As to expression, epidermis of newly eclosed adults.

Functionally, component of the circadian clock or downstream effector of clock function. Required for suppressing daytime sleep (siesta) under ambient environmental temperatures. Part of a heat avoidance mechanism that modulates daytime sleep behavior under different environmental temperatures to minimize the risk of heat exposure. Under cooler ambient temperatures, suppresses daytime sleep (siesta) and thus allows for longer periods of daytime activity. The chain is Circadian clock-controlled protein daywake from Drosophila melanogaster (Fruit fly).